The sequence spans 691 residues: Guanylate cyclase soluble subunit alpha-1 (691 aa).

A Phosphoserine modification is found at Ser267. The 128-residue stretch at 480–607 folds into the Guanylate cyclase domain; it reads VTMLFSDIVG…GNNVTLANKF (128 aa).

The protein belongs to the adenylyl cyclase class-4/guanylyl cyclase family. The active enzyme is formed by a heterodimer of an alpha and a beta subunit. Heterodimer with GUCY1B1. Requires Mg(2+) as cofactor. The cofactor is Mn(2+).

The protein localises to the cytoplasm. The enzyme catalyses GTP = 3',5'-cyclic GMP + diphosphate. With respect to regulation, activated by nitric oxide in the presence of magnesium or manganese ions. The polypeptide is Guanylate cyclase soluble subunit alpha-1 (Gucy1a1) (Mus musculus (Mouse)).